We begin with the raw amino-acid sequence, 248 residues long: Triosephosphate isomerase (248 aa).

Positions 11 and 13 each coordinate substrate. Histidine 95 serves as the catalytic Electrophile. Residue glutamate 165 is the Proton acceptor of the active site.

This sequence belongs to the triosephosphate isomerase family. Homodimer.

Its subcellular location is the cytoplasm. It catalyses the reaction dihydroxyacetone phosphate = methylglyoxal + phosphate. It carries out the reaction D-glyceraldehyde 3-phosphate = dihydroxyacetone phosphate. It functions in the pathway carbohydrate degradation; glycolysis; D-glyceraldehyde 3-phosphate from glycerone phosphate: step 1/1. Its pathway is carbohydrate biosynthesis; gluconeogenesis. Functionally, triosephosphate isomerase is an extremely efficient metabolic enzyme that catalyzes the interconversion between dihydroxyacetone phosphate (DHAP) and D-glyceraldehyde-3-phosphate (G3P) in glycolysis and gluconeogenesis. Its function is as follows. It is also responsible for the non-negligible production of methylglyoxal a reactive cytotoxic side-product that modifies and can alter proteins, DNA and lipids. The sequence is that of Triosephosphate isomerase (tpi1) from Xenopus laevis (African clawed frog).